We begin with the raw amino-acid sequence, 88 residues long: DNA-directed RNA polymerase subunit omega (88 aa).

It belongs to the RNA polymerase subunit omega family. The RNAP catalytic core consists of 2 alpha, 1 beta, 1 beta' and 1 omega subunit. When a sigma factor is associated with the core the holoenzyme is formed, which can initiate transcription.

It carries out the reaction RNA(n) + a ribonucleoside 5'-triphosphate = RNA(n+1) + diphosphate. Functionally, promotes RNA polymerase assembly. Latches the N- and C-terminal regions of the beta' subunit thereby facilitating its interaction with the beta and alpha subunits. The protein is DNA-directed RNA polymerase subunit omega of Yersinia pestis (strain Pestoides F).